The following is a 406-amino-acid chain: Cysteine desulfurase (406 aa).

The residue at position 226 (Lys226) is an N6-(pyridoxal phosphate)lysine. The Cysteine persulfide intermediate role is filled by Cys364.

It belongs to the class-V pyridoxal-phosphate-dependent aminotransferase family. Csd subfamily. In terms of assembly, homodimer. Interacts with SufE and the SufBCD complex composed of SufB, SufC and SufD. The interaction with SufE is required to mediate the direct transfer of the sulfur atom from the S-sulfanylcysteine. It depends on pyridoxal 5'-phosphate as a cofactor.

The protein localises to the cytoplasm. The catalysed reaction is (sulfur carrier)-H + L-cysteine = (sulfur carrier)-SH + L-alanine. It catalyses the reaction L-selenocysteine + AH2 = hydrogenselenide + L-alanine + A + H(+). It functions in the pathway cofactor biosynthesis; iron-sulfur cluster biosynthesis. Functionally, cysteine desulfurases mobilize the sulfur from L-cysteine to yield L-alanine, an essential step in sulfur metabolism for biosynthesis of a variety of sulfur-containing biomolecules. Component of the suf operon, which is activated and required under specific conditions such as oxidative stress and iron limitation. Acts as a potent selenocysteine lyase in vitro, that mobilizes selenium from L-selenocysteine. Selenocysteine lyase activity is however unsure in vivo. The sequence is that of Cysteine desulfurase from Klebsiella pneumoniae (strain 342).